Consider the following 101-residue polypeptide: Small ribosomal subunit protein uS14 (101 aa).

Positions 1 to 10 are enriched in basic and acidic residues; sequence MAKKSSIEKN. The disordered stretch occupies residues 1-23; the sequence is MAKKSSIEKNNRRRKMTKNAAPK. The span at 11–23 shows a compositional bias: basic residues; it reads NRRRKMTKNAAPK.

The protein belongs to the universal ribosomal protein uS14 family. Part of the 30S ribosomal subunit. Contacts proteins S3 and S10.

In terms of biological role, binds 16S rRNA, required for the assembly of 30S particles and may also be responsible for determining the conformation of the 16S rRNA at the A site. This chain is Small ribosomal subunit protein uS14, found in Rhodopseudomonas palustris (strain BisB5).